Consider the following 194-residue polypeptide: MSLVPVVVEQTNRGERSYDIYSRLLKDRIIMLSEEVNDTTASLIVAQLLFLEAEDPDKDIHLYINSPGGSITSGMAIYDTMQYIKPDVSTICVGMAASMGAFLLVAGAKGKRYALPNSEVMIHQPLGGFQGQATDIGIHAERILKMKKKLNTILSDRTGKPLEQVELDTERDHFLSAEEAKEYGLIDEVIDKKK.

Residue serine 98 is the Nucleophile of the active site. The active site involves histidine 123.

This sequence belongs to the peptidase S14 family. As to quaternary structure, fourteen ClpP subunits assemble into 2 heptameric rings which stack back to back to give a disk-like structure with a central cavity, resembling the structure of eukaryotic proteasomes.

It localises to the cytoplasm. The enzyme catalyses Hydrolysis of proteins to small peptides in the presence of ATP and magnesium. alpha-casein is the usual test substrate. In the absence of ATP, only oligopeptides shorter than five residues are hydrolyzed (such as succinyl-Leu-Tyr-|-NHMec, and Leu-Tyr-Leu-|-Tyr-Trp, in which cleavage of the -Tyr-|-Leu- and -Tyr-|-Trp bonds also occurs).. Functionally, cleaves peptides in various proteins in a process that requires ATP hydrolysis. Has a chymotrypsin-like activity. Plays a major role in the degradation of misfolded proteins. In Clostridium botulinum (strain Loch Maree / Type A3), this protein is ATP-dependent Clp protease proteolytic subunit.